Consider the following 552-residue polypeptide: Chaperonin GroEL (552 aa).

ATP-binding positions include 30–33 (TLGP), K51, 87–91 (DGTTT), G415, and D499.

Belongs to the chaperonin (HSP60) family. In terms of assembly, forms a cylinder of 14 subunits composed of two heptameric rings stacked back-to-back. Interacts with the co-chaperonin GroES.

It is found in the cytoplasm. It carries out the reaction ATP + H2O + a folded polypeptide = ADP + phosphate + an unfolded polypeptide.. Functionally, together with its co-chaperonin GroES, plays an essential role in assisting protein folding. The GroEL-GroES system forms a nano-cage that allows encapsulation of the non-native substrate proteins and provides a physical environment optimized to promote and accelerate protein folding. This chain is Chaperonin GroEL, found in Hamiltonella defensa subsp. Acyrthosiphon pisum (strain 5AT).